Here is a 1307-residue protein sequence, read N- to C-terminus: Cyclic nucleotide-gated channel beta-1 (1307 aa).

Disordered stretches follow at residues 1–101 (MLGW…AQVA), 126–178 (QPVY…TEPS), 193–262 (LPQP…PGDP), 320–458 (DSCW…LDSC), 470–625 (LERA…SQNS), and 648–681 (EKLIDPDVTSDEESPKPSPAKKAPDSAPAQKPAE). Residues 1 to 720 (MLGWVQRVLP…SIDPLTNLMY (720 aa)) are Cytoplasmic-facing. Over residues 43–59 (VQPEPEPEPEPAPEEAA) the composition is skewed to acidic residues. Residues 165–174 (GSDKTSKTQD) show a composition bias toward basic and acidic residues. Residues 361–386 (QEEEEEEKEEKEEKEEEEEKEEEEKR) show a composition bias toward acidic residues. Residues 387-406 (EEEKKKEKEEEKKEKEKEEK) show a composition bias toward basic and acidic residues. 2 stretches are compositionally biased toward acidic residues: residues 407–451 (EEKE…EEEP) and 483–518 (LPEEEEEKEEEKKEEEEEKEEEEEKEEEEEKEEEGE). The segment covering 550 to 560 (TIPPPERPPVS) has biased composition (pro residues). The tract at residues 621–631 (ASQNSAIINDR) is calmodulin-binding CaM1. Residues 721-742 (ILWLFFVVLAWNWNCWLIPVRW) traverse the membrane as a helical segment. Over 743 to 751 (AFPYQRADN) the chain is Extracellular. Residues 752 to 773 (IHLWLLMDYLCDFIYLLDITVF) traverse the membrane as a helical segment. Residues 774–788 (QMRLQFVKGGDIITD) lie on the Cytoplasmic side of the membrane. The helical transmembrane segment at 789 to 808 (KKEMRNNYLKSQRFKMDLLC) threads the bilayer. Topologically, residues 809–824 (LLPLDFLYLKLGVNPL) are extracellular. A helical transmembrane segment spans residues 825–837 (LRLPRCLKYMAFF). At 838-849 (EFNNRLEAILSK) the chain is on the cytoplasmic side. A helical membrane pass occupies residues 850–872 (AYVYRVIRTTAYLLYSLHLNSCL). Positions 850-949 (AYVYRVIRTT…IGQMRDVVGA (100 aa)) are ion conduction pathway. Topologically, residues 873–895 (YYWASAFQGIGSTHWVYDGVGNS) are extracellular. Helical transmembrane passes span 896-922 (YIRCYYWAVKTLITIGGLPDPQTLFEI) and 923-948 (VFQLLNYFTGVFAFSVMIGQMRDVVG). At 949–1307 (AATAGQTYYR…MLEEKKEEVE (359 aa)) the chain is on the cytoplasmic side. Residues 952 to 1028 (AGQTYYRSCM…NIVSKVALFQ (77 aa)) are C-linker. The cNMP-binding domain stretch occupies residues 1026-1130 (LFQGCDRQMI…LDKKDLNEIL (105 aa)). The tract at residues 1032 to 1148 (RQMIFDMLKR…LLRKKARRML (117 aa)) is cyclic nucleotide-binding domain. Residues glycine 1093, glutamate 1094, serine 1096, arginine 1106, and threonine 1107 each coordinate 3',5'-cyclic GMP. Arginine 1106 lines the 3',5'-cyclic AMP pocket. A calmodulin-binding CaM2 region spans residues 1212–1218 (QQQLLEQ). Positions 1214 to 1238 (QLLEQAKSSQEAGGEEGSGATDQPA) are enriched in low complexity. Residues 1214 to 1307 (QLLEQAKSSQ…MLEEKKEEVE (94 aa)) are disordered. A compositionally biased stretch (pro residues) spans 1250 to 1261 (EPPAPSSPPPAS).

Belongs to the cyclic nucleotide-gated cation channel (TC 1.A.1.5) family. CNGB1 subfamily. As to quaternary structure, the rod cyclic nucleotide-gated channel is a heterotetramer composed of CNGA1 and CNGB1 subunits with 3:1 stoichiometry. CNGA1:CNGB1 channel binds Ca(2+)-bound CALM1 via CaM1 and CaM2 regions of the CNGB1 subunit; this interaction modulates the affinity of the channel for cNMPs in response to intracellular Ca(2+) levels. The olfactory cyclic nucleotide-gated channel is a heterotetramer composed of CNGA2, CNGA4 and CNGB1b subunits with 2:1:1 stoichiometry. In terms of tissue distribution, expressed in olfactory sensory cilia (at protein level).

It localises to the cell projection. Its subcellular location is the cilium membrane. The enzyme catalyses Ca(2+)(in) = Ca(2+)(out). It catalyses the reaction Na(+)(in) = Na(+)(out). The catalysed reaction is K(+)(in) = K(+)(out). It carries out the reaction NH4(+)(in) = NH4(+)(out). The enzyme catalyses Rb(+)(in) = Rb(+)(out). It catalyses the reaction Li(+)(in) = Li(+)(out). The catalysed reaction is Cs(+)(in) = Cs(+)(out). Its function is as follows. Pore-forming subunit of the rod cyclic nucleotide-gated channel. Mediates rod photoresponses at dim light converting transient changes in intracellular cGMP levels into electrical signals. In the dark, cGMP levels are high and keep the channel open enabling a steady inward current carried by Na(+) and Ca(2+) ions that leads to membrane depolarization and neurotransmitter release from synaptic terminals. Upon photon absorption cGMP levels decline leading to channel closure and membrane hyperpolarization that ultimately slows neurotransmitter release and signals the presence of light, the end point of the phototransduction cascade. Conducts cGMP- and cAMP-gated ion currents, with permeability for monovalent and divalent cations. The selectivity for Ca(2+) over Na(+) increases with cGMP concentrations, whereas the selectivity among monovalent ions is independent of the cGMP levels. In terms of biological role, pore-forming subunit of the olfactory cyclic nucleotide-gated channel. Operates in the cilia of olfactory sensory neurons where chemical stimulation of the odorant is converted to an electrical signal. Mediates odorant-induced cAMP-dependent Ca(2+) influx triggering neuron depolarization. The rise of intracellular Ca(2+) levels potentiates the olfactory response by activating Ca(2+)-dependent Cl(-) channels, but it also serves as a negative feedback signal to desensitize the channel for rapid adaptation to odorants. This chain is Cyclic nucleotide-gated channel beta-1, found in Rattus norvegicus (Rat).